The sequence spans 212 residues: Large ribosomal subunit protein bL25 (212 aa).

The segment covering 1–16 has biased composition (basic and acidic residues); it reads MKTRIDLTVEPRETGK. The segment at 1–22 is disordered; that stretch reads MKTRIDLTVEPRETGKHNSRGL.

It belongs to the bacterial ribosomal protein bL25 family. CTC subfamily. As to quaternary structure, part of the 50S ribosomal subunit; part of the 5S rRNA/L5/L18/L25 subcomplex. Contacts the 5S rRNA. Binds to the 5S rRNA independently of L5 and L18.

This is one of the proteins that binds to the 5S RNA in the ribosome where it forms part of the central protuberance. The protein is Large ribosomal subunit protein bL25 of Bdellovibrio bacteriovorus (strain ATCC 15356 / DSM 50701 / NCIMB 9529 / HD100).